A 45-amino-acid chain; its full sequence is Psychimicin (45 aa).

Disulfide bonds link cysteine 10/cysteine 24, cysteine 14/cysteine 36, and cysteine 25/cysteine 42.

As to quaternary structure, monomer. In terms of tissue distribution, hemolymph.

Its subcellular location is the secreted. Has antimicrobial activity. Is particularly active against fungi, and to a lesser extent against Gram-positive and Gram-negative bacteria. This Oiketicus kirbyi (Bagworm moth) protein is Psychimicin.